Consider the following 148-residue polypeptide: Iron/alpha-ketoglutarate-dependent dioxygenase ausU (148 aa).

Fe cation-binding residues include His45 and Asp47.

Belongs to the PhyH family. In terms of assembly, homodimer. Fe cation is required as a cofactor.

It participates in secondary metabolite biosynthesis; terpenoid biosynthesis. Its function is as follows. Iron/alpha-ketoglutarate-dependent dioxygenase; part of the gene cluster B that mediates the biosynthesis of austinol and dehydroaustinol, two fungal meroterpenoids. The first step of the pathway is the synthesis of 3,5-dimethylorsellinic acid by the polyketide synthase ausA. 3,5-dimethylorsellinic acid is then prenylated by the polyprenyl transferase ausN. Further epoxidation by the FAD-dependent monooxygenase ausM and cyclization by the probable terpene cyclase ausL lead to the formation of protoaustinoid A. Protoaustinoid A is then oxidized to spiro-lactone preaustinoid A3 by the combined action of the FAD-binding monooxygenases ausB and ausC, and the dioxygenase ausE. Acid-catalyzed keto-rearrangement and ring contraction of the tetraketide portion of preaustinoid A3 by ausJ lead to the formation of preaustinoid A4. The aldo-keto reductase ausK, with the help of ausH, is involved in the next step by transforming preaustinoid A4 into isoaustinone which is in turn hydroxylated by the P450 monooxygenase ausI to form austinolide. Finally, the cytochrome P450 monooxygenase ausG modifies austinolide to austinol. Austinol can be further modified to dehydroaustinol which forms a diffusible complex with diorcinol that initiates conidiation. Due to genetic rearrangements of the clusters and the subsequent loss of some enzymes, the end products of the Emericella nidulans austinoid biosynthesis clusters are austinol and dehydroaustinol, even if additional enzymes, such as the O-acetyltransferase ausQ and the cytochrome P450 monooxygenase ausR are still functional. This Emericella nidulans (strain FGSC A4 / ATCC 38163 / CBS 112.46 / NRRL 194 / M139) (Aspergillus nidulans) protein is Iron/alpha-ketoglutarate-dependent dioxygenase ausU.